Reading from the N-terminus, the 86-residue chain is Small ribosomal subunit protein uS17 (86 aa).

This sequence belongs to the universal ribosomal protein uS17 family. As to quaternary structure, part of the 30S ribosomal subunit.

In terms of biological role, one of the primary rRNA binding proteins, it binds specifically to the 5'-end of 16S ribosomal RNA. This is Small ribosomal subunit protein uS17 from Nitrosococcus oceani (strain ATCC 19707 / BCRC 17464 / JCM 30415 / NCIMB 11848 / C-107).